A 193-amino-acid chain; its full sequence is dCTP deaminase (193 aa).

DCTP is bound by residues 110–115 (RSSLAR), D128, 136–138 (VLE), Y171, K178, and Q182. Residue E138 is the Proton donor/acceptor of the active site. The interval 171-193 (YNKRKNAKYKDQQDAVASRISQD) is disordered.

Belongs to the dCTP deaminase family. In terms of assembly, homotrimer.

It carries out the reaction dCTP + H2O + H(+) = dUTP + NH4(+). The protein operates within pyrimidine metabolism; dUMP biosynthesis; dUMP from dCTP (dUTP route): step 1/2. Its function is as follows. Catalyzes the deamination of dCTP to dUTP. The sequence is that of dCTP deaminase from Shewanella oneidensis (strain ATCC 700550 / JCM 31522 / CIP 106686 / LMG 19005 / NCIMB 14063 / MR-1).